Reading from the N-terminus, the 205-residue chain is LexA repressor (205 aa).

A DNA-binding region (H-T-H motif) is located at residues 28–48 (RAEIAHKLGFRSANSAEEHLK). Residues serine 122 and lysine 159 each act as for autocatalytic cleavage activity in the active site.

Belongs to the peptidase S24 family. Homodimer.

It catalyses the reaction Hydrolysis of Ala-|-Gly bond in repressor LexA.. Its function is as follows. Represses a number of genes involved in the response to DNA damage (SOS response), including recA and lexA. In the presence of single-stranded DNA, RecA interacts with LexA causing an autocatalytic cleavage which disrupts the DNA-binding part of LexA, leading to derepression of the SOS regulon and eventually DNA repair. This Idiomarina loihiensis (strain ATCC BAA-735 / DSM 15497 / L2-TR) protein is LexA repressor.